The sequence spans 217 residues: Large ribosomal subunit protein uL3 (217 aa).

Residues 131–155 (FSSSRASHGNSRSHNVPGSIGMAQD) form a disordered region. Over residues 132–145 (SSSRASHGNSRSHN) the composition is skewed to low complexity. Q154 carries the post-translational modification N5-methylglutamine.

This sequence belongs to the universal ribosomal protein uL3 family. In terms of assembly, part of the 50S ribosomal subunit. Forms a cluster with proteins L14 and L19. Methylated by PrmB.

Functionally, one of the primary rRNA binding proteins, it binds directly near the 3'-end of the 23S rRNA, where it nucleates assembly of the 50S subunit. In Nitrosomonas eutropha (strain DSM 101675 / C91 / Nm57), this protein is Large ribosomal subunit protein uL3.